Here is a 394-residue protein sequence, read N- to C-terminus: Flavohemoprotein (394 aa).

The Globin domain maps to 1-138; it reads MLTQEHINII…LAQVFIDREG (138 aa). Position 85 (His85) interacts with heme b. Residues Tyr95 and Glu137 each act as charge relay system in the active site. Positions 149-394 are reductase; the sequence is GGWRDGRTFV…VFGPHAQLAA (246 aa). The FAD-binding FR-type domain maps to 152 to 262; that stretch reads RDGRTFVVRE…YAPAGDFFYV (111 aa). FAD is bound by residues Tyr190 and 206 to 209; that span reads RQYS. 274-279 is a binding site for NADP(+); it reads GVGATP. 385 to 388 serves as a coordination point for FAD; the sequence is VFGP.

The protein belongs to the globin family. Two-domain flavohemoproteins subfamily. It in the C-terminal section; belongs to the flavoprotein pyridine nucleotide cytochrome reductase family. Heme b is required as a cofactor. It depends on FAD as a cofactor.

The catalysed reaction is 2 nitric oxide + NADPH + 2 O2 = 2 nitrate + NADP(+) + H(+). The enzyme catalyses 2 nitric oxide + NADH + 2 O2 = 2 nitrate + NAD(+) + H(+). Its function is as follows. Is involved in NO detoxification in an aerobic process, termed nitric oxide dioxygenase (NOD) reaction that utilizes O(2) and NAD(P)H to convert NO to nitrate, which protects the bacterium from various noxious nitrogen compounds. Therefore, plays a central role in the inducible response to nitrosative stress. This chain is Flavohemoprotein (hmp), found in Vibrio cholerae serotype O1 (strain ATCC 39315 / El Tor Inaba N16961).